The chain runs to 59 residues: Protein translocase subunit SecE (59 aa).

Residues 30–50 form a helical membrane-spanning segment; it reads ITVITTVIFFAIFFALIDSGI.

It belongs to the SecE/SEC61-gamma family. Component of the Sec protein translocase complex. Heterotrimer consisting of SecY, SecE and SecG subunits. The heterotrimers can form oligomers, although 1 heterotrimer is thought to be able to translocate proteins. Interacts with the ribosome. Interacts with SecDF, and other proteins may be involved. Interacts with SecA.

The protein localises to the cell membrane. Functionally, essential subunit of the Sec protein translocation channel SecYEG. Clamps together the 2 halves of SecY. May contact the channel plug during translocation. This is Protein translocase subunit SecE from Bacillus licheniformis.